A 155-amino-acid polypeptide reads, in one-letter code: Small ribosomal subunit protein uS7 (155 aa).

It belongs to the universal ribosomal protein uS7 family. In terms of assembly, part of the 30S ribosomal subunit. Contacts proteins S9 and S11.

Functionally, one of the primary rRNA binding proteins, it binds directly to 16S rRNA where it nucleates assembly of the head domain of the 30S subunit. Is located at the subunit interface close to the decoding center, probably blocks exit of the E-site tRNA. This Cytophaga hutchinsonii (strain ATCC 33406 / DSM 1761 / CIP 103989 / NBRC 15051 / NCIMB 9469 / D465) protein is Small ribosomal subunit protein uS7.